A 460-amino-acid polypeptide reads, in one-letter code: tRNA modification GTPase MnmE (460 aa).

Residues Arg29, Glu91, and Lys132 each contribute to the (6S)-5-formyl-5,6,7,8-tetrahydrofolate site. Positions Gly227–Gly383 constitute a TrmE-type G domain. Residue Asn237 participates in K(+) binding. Residues Asn237 to Ser242, Thr256 to Thr262, and Asp281 to Gly284 each bind GTP. Ser241 is a Mg(2+) binding site. Residues Thr256, Ile258, and Thr261 each coordinate K(+). Residue Thr262 coordinates Mg(2+). Residue Lys460 participates in (6S)-5-formyl-5,6,7,8-tetrahydrofolate binding.

The protein belongs to the TRAFAC class TrmE-Era-EngA-EngB-Septin-like GTPase superfamily. TrmE GTPase family. As to quaternary structure, homodimer. Heterotetramer of two MnmE and two MnmG subunits. K(+) is required as a cofactor.

Its subcellular location is the cytoplasm. Its function is as follows. Exhibits a very high intrinsic GTPase hydrolysis rate. Involved in the addition of a carboxymethylaminomethyl (cmnm) group at the wobble position (U34) of certain tRNAs, forming tRNA-cmnm(5)s(2)U34. This is tRNA modification GTPase MnmE from Prochlorococcus marinus (strain MIT 9301).